A 566-amino-acid chain; its full sequence is DNA ligase B (566 aa).

The active-site N6-AMP-lysine intermediate is the lysine 125.

Belongs to the NAD-dependent DNA ligase family. LigB subfamily.

It carries out the reaction NAD(+) + (deoxyribonucleotide)n-3'-hydroxyl + 5'-phospho-(deoxyribonucleotide)m = (deoxyribonucleotide)n+m + AMP + beta-nicotinamide D-nucleotide.. Its function is as follows. Catalyzes the formation of phosphodiester linkages between 5'-phosphoryl and 3'-hydroxyl groups in double-stranded DNA using NAD as a coenzyme and as the energy source for the reaction. The polypeptide is DNA ligase B (Pseudomonas putida (strain GB-1)).